A 69-amino-acid chain; its full sequence is Large ribosomal subunit protein uL29 (69 aa).

The protein belongs to the universal ribosomal protein uL29 family.

The polypeptide is Large ribosomal subunit protein uL29 (Granulibacter bethesdensis (strain ATCC BAA-1260 / CGDNIH1)).